The chain runs to 68 residues: DNA-directed RNA polymerase subunit omega (68 aa).

Belongs to the RNA polymerase subunit omega family. The RNAP catalytic core consists of 2 alpha, 1 beta, 1 beta' and 1 omega subunit. When a sigma factor is associated with the core the holoenzyme is formed, which can initiate transcription.

It catalyses the reaction RNA(n) + a ribonucleoside 5'-triphosphate = RNA(n+1) + diphosphate. Functionally, promotes RNA polymerase assembly. Latches the N- and C-terminal regions of the beta' subunit thereby facilitating its interaction with the beta and alpha subunits. The sequence is that of DNA-directed RNA polymerase subunit omega from Geobacter sp. (strain M21).